A 174-amino-acid chain; its full sequence is RNA pyrophosphohydrolase (174 aa).

In terms of domain architecture, Nudix hydrolase spans 6–149; the sequence is GFRANVGIII…KRDVYRKVMK (144 aa). A Nudix box motif is present at residues 38–59; it reads GGVDDGESAEEAMYRELYEEVG.

The protein belongs to the Nudix hydrolase family. RppH subfamily. Requires a divalent metal cation as cofactor.

In terms of biological role, accelerates the degradation of transcripts by removing pyrophosphate from the 5'-end of triphosphorylated RNA, leading to a more labile monophosphorylated state that can stimulate subsequent ribonuclease cleavage. In Shewanella oneidensis (strain ATCC 700550 / JCM 31522 / CIP 106686 / LMG 19005 / NCIMB 14063 / MR-1), this protein is RNA pyrophosphohydrolase.